The chain runs to 466 residues: Adenosylhomocysteinase (466 aa).

Positions 57, 132, and 192 each coordinate substrate. 193–195 lines the NAD(+) pocket; it reads TTT. Residues K222 and D226 each contribute to the substrate site. Residues N227, 256–261, E279, N314, 335–337, and N380 each bind NAD(+); these read GYGDVG and IGH.

Belongs to the adenosylhomocysteinase family. NAD(+) is required as a cofactor.

It is found in the cytoplasm. The enzyme catalyses S-adenosyl-L-homocysteine + H2O = L-homocysteine + adenosine. It participates in amino-acid biosynthesis; L-homocysteine biosynthesis; L-homocysteine from S-adenosyl-L-homocysteine: step 1/1. Its function is as follows. May play a key role in the regulation of the intracellular concentration of adenosylhomocysteine. This chain is Adenosylhomocysteinase, found in Rhizobium rhizogenes (strain K84 / ATCC BAA-868) (Agrobacterium radiobacter).